The sequence spans 217 residues: Small ribosomal subunit protein uS3 (217 aa).

Residues 40-110 form the KH type-2 domain; it reads IRDLINKGFN…EVYINIHEVR (71 aa).

The protein belongs to the universal ribosomal protein uS3 family. Part of the 30S ribosomal subunit. Forms a tight complex with proteins S10 and S14.

In terms of biological role, binds the lower part of the 30S subunit head. Binds mRNA in the 70S ribosome, positioning it for translation. This chain is Small ribosomal subunit protein uS3, found in Rickettsia akari (strain Hartford).